The sequence spans 156 residues: Small ribosomal subunit protein uS7c (156 aa).

It belongs to the universal ribosomal protein uS7 family. In terms of assembly, part of the 30S ribosomal subunit.

The protein resides in the plastid. The protein localises to the cyanelle. One of the primary rRNA binding proteins, it binds directly to 16S rRNA where it nucleates assembly of the head domain of the 30S subunit. The chain is Small ribosomal subunit protein uS7c (rps7) from Cyanophora paradoxa.